Reading from the N-terminus, the 156-residue chain is 3-dehydroquinate dehydratase (156 aa).

Residue tyrosine 24 is the Proton acceptor of the active site. Residues asparagine 76, histidine 82, and aspartate 89 each contribute to the substrate site. Residue histidine 102 is the Proton donor of the active site. Substrate-binding positions include 103–104 (IS) and arginine 113.

The protein belongs to the type-II 3-dehydroquinase family. In terms of assembly, homododecamer.

It catalyses the reaction 3-dehydroquinate = 3-dehydroshikimate + H2O. The protein operates within metabolic intermediate biosynthesis; chorismate biosynthesis; chorismate from D-erythrose 4-phosphate and phosphoenolpyruvate: step 3/7. Its function is as follows. Catalyzes a trans-dehydration via an enolate intermediate. The sequence is that of 3-dehydroquinate dehydratase from Nitrobacter winogradskyi (strain ATCC 25391 / DSM 10237 / CIP 104748 / NCIMB 11846 / Nb-255).